The following is a 258-amino-acid chain: Probable succinate transporter subunit YjjP (258 aa).

5 helical membrane-spanning segments follow: residues 116–137 (YPRWLLVLMVGLSCACFCKLNN), 143–160 (AVVTFFASTVAMYIRQLL), 171–191 (FCITAFVATTISGLMLRLPAF), 197–217 (IAMAASVLLLVPGFPLINAVA), and 231–251 (WAIASLLTLATCIGVVMAMTM).

Belongs to the ThrE exporter (TC 2.A.79) family. The transporter is composed of YjjB and YjjP.

The protein resides in the cell inner membrane. In terms of biological role, involved in succinate export with YjjB. Both proteins are required for export. Participates in succinate export, but also in the export of other dicarboxylates, such as fumarate and malate. Contributes to succinate production under both aerobic and anaerobic conditions, and increases fumarate and malate production during anaerobic succinate production. This Klebsiella aerogenes (strain ATCC 13048 / DSM 30053 / CCUG 1429 / JCM 1235 / KCTC 2190 / NBRC 13534 / NCIMB 10102 / NCTC 10006 / CDC 819-56) (Enterobacter aerogenes) protein is Probable succinate transporter subunit YjjP.